The sequence spans 207 residues: LexA repressor (207 aa).

A DNA-binding region (H-T-H motif) is located at residues 29 to 49 (VREICSAVDLSSTSTVHGHLA). Residues serine 128 and lysine 166 each act as for autocatalytic cleavage activity in the active site.

It belongs to the peptidase S24 family. Homodimer.

The enzyme catalyses Hydrolysis of Ala-|-Gly bond in repressor LexA.. Represses a number of genes involved in the response to DNA damage (SOS response), including recA and lexA. In the presence of single-stranded DNA, RecA interacts with LexA causing an autocatalytic cleavage which disrupts the DNA-binding part of LexA, leading to derepression of the SOS regulon and eventually DNA repair. This is LexA repressor from Lactobacillus gasseri (strain ATCC 33323 / DSM 20243 / BCRC 14619 / CIP 102991 / JCM 1131 / KCTC 3163 / NCIMB 11718 / NCTC 13722 / AM63).